We begin with the raw amino-acid sequence, 703 residues long: Elongation factor G (703 aa).

Positions 9–292 (ERTRNIGIMA…AVVDYLPGPL (284 aa)) constitute a tr-type G domain. GTP contacts are provided by residues 18–25 (AHIDAGKT), 91–95 (DTPGH), and 145–148 (NKMD).

The protein belongs to the TRAFAC class translation factor GTPase superfamily. Classic translation factor GTPase family. EF-G/EF-2 subfamily.

It localises to the cytoplasm. Catalyzes the GTP-dependent ribosomal translocation step during translation elongation. During this step, the ribosome changes from the pre-translocational (PRE) to the post-translocational (POST) state as the newly formed A-site-bound peptidyl-tRNA and P-site-bound deacylated tRNA move to the P and E sites, respectively. Catalyzes the coordinated movement of the two tRNA molecules, the mRNA and conformational changes in the ribosome. This Leuconostoc mesenteroides subsp. mesenteroides (strain ATCC 8293 / DSM 20343 / BCRC 11652 / CCM 1803 / JCM 6124 / NCDO 523 / NBRC 100496 / NCIMB 8023 / NCTC 12954 / NRRL B-1118 / 37Y) protein is Elongation factor G.